The following is a 218-amino-acid chain: Large ribosomal subunit protein uL16 (218 aa).

The protein belongs to the universal ribosomal protein uL16 family. In terms of assembly, component of the large ribosomal subunit. Mature ribosomes consist of a small (40S) and a large (60S) subunit. The 40S subunit contains about 33 different proteins and 1 molecule of RNA (18S). The 60S subunit contains about 49 different proteins and 3 molecules of RNA (28S, 5.8S and 5S).

The protein is Large ribosomal subunit protein uL16 (RpL10) of Drosophila melanogaster (Fruit fly).